The chain runs to 711 residues: Ribosomal RNA large subunit methyltransferase K/L (711 aa).

The THUMP domain occupies 43–154 (TLYRTLLWSR…RENLVISLDL (112 aa)).

The protein belongs to the methyltransferase superfamily. RlmKL family.

The protein resides in the cytoplasm. It catalyses the reaction guanosine(2445) in 23S rRNA + S-adenosyl-L-methionine = N(2)-methylguanosine(2445) in 23S rRNA + S-adenosyl-L-homocysteine + H(+). It carries out the reaction guanosine(2069) in 23S rRNA + S-adenosyl-L-methionine = N(2)-methylguanosine(2069) in 23S rRNA + S-adenosyl-L-homocysteine + H(+). Its function is as follows. Specifically methylates the guanine in position 2445 (m2G2445) and the guanine in position 2069 (m7G2069) of 23S rRNA. The sequence is that of Ribosomal RNA large subunit methyltransferase K/L from Haemophilus influenzae (strain PittEE).